The sequence spans 672 residues: MHKVQFADVHFNAENTPVSAQFDDVYFSNQDGLAESHYIFQEGNQLWQRWQQTSEAHFVIAETGFGTGLNFFAVTQRFREFRLTYPDAPLKRLFFISFEKYPLPLAQLKRAHQAYPEFQSLAQQLQQSWLEPIVGCYRFHFAETTLDLWFGDMAENLPQLGDYMCNKIDAWFLDGFAPSKNPQMWQDTLYQHMYRYTKTQGTFSTFTAASAVRKGLIHAGFTVTKRKGYGKKRECLQGVKAQQQPADIHAPWALVQPAELTENADIALIGGGIASVFSALSLLERGAKVTVYCEDNSLAANASGNKQGAFYPQLSDDDLRYIRFYIHAFAYGKQRFNWAIEQGITFEHDFCGVALCAYDAKSAVKLAKISALQLPPSLYQPLSQQALSEQVGLPLPCDGGFIAQGAWLSPQQFVQNTFDFLATRGVIIKTQQKITALERQTTHWLLTTEQGDSFKHQVVVLANGHKLTQFRQTEHLPVYPVRGQVSEIATSTELSKLKAVICYDGYLTPKAASQTHCLGASHLRDNAERAFSLQEQQENQQKIQTNLASVDWVNEVDTRNNQARIGIRCSVRDRIPMLGNVPDFEQQLSDYHNLYNLRRRKHAIKHAALHPNLFLIGALGSRGLTSAPLLAETLASLIYHEPLPLSEDILHQLNANRSWIRKLLKGSQVKQG.

The tract at residues 1–241 (MHKVQFADVH…KRECLQGVKA (241 aa)) is tRNA (mnm(5)s(2)U34)-methyltransferase. The interval 269-672 (IGGGIASVFS…LLKGSQVKQG (404 aa)) is FAD-dependent cmnm(5)s(2)U34 oxidoreductase.

The protein in the N-terminal section; belongs to the methyltransferase superfamily. tRNA (mnm(5)s(2)U34)-methyltransferase family. It in the C-terminal section; belongs to the DAO family. FAD serves as cofactor.

It is found in the cytoplasm. It catalyses the reaction 5-aminomethyl-2-thiouridine(34) in tRNA + S-adenosyl-L-methionine = 5-methylaminomethyl-2-thiouridine(34) in tRNA + S-adenosyl-L-homocysteine + H(+). Catalyzes the last two steps in the biosynthesis of 5-methylaminomethyl-2-thiouridine (mnm(5)s(2)U) at the wobble position (U34) in tRNA. Catalyzes the FAD-dependent demodification of cmnm(5)s(2)U34 to nm(5)s(2)U34, followed by the transfer of a methyl group from S-adenosyl-L-methionine to nm(5)s(2)U34, to form mnm(5)s(2)U34. The chain is tRNA 5-methylaminomethyl-2-thiouridine biosynthesis bifunctional protein MnmC from Pasteurella multocida (strain Pm70).